The following is a 114-amino-acid chain: Large ribosomal subunit protein bL20 (114 aa).

This sequence belongs to the bacterial ribosomal protein bL20 family.

Functionally, binds directly to 23S ribosomal RNA and is necessary for the in vitro assembly process of the 50S ribosomal subunit. It is not involved in the protein synthesizing functions of that subunit. This Flavobacterium johnsoniae (strain ATCC 17061 / DSM 2064 / JCM 8514 / BCRC 14874 / CCUG 350202 / NBRC 14942 / NCIMB 11054 / UW101) (Cytophaga johnsonae) protein is Large ribosomal subunit protein bL20.